A 228-amino-acid polypeptide reads, in one-letter code: Calcyclin-binding protein (228 aa).

Ala2 is subject to N-acetylalanine. Residues 2–80 are interaction with SIAH1; the sequence is ASEELQKDLE…YTVKISNYGW (79 aa). Ser3 is subject to Phosphoserine. N6-acetyllysine occurs at positions 8 and 19. Ser34 is modified (phosphoserine). The CS domain occupies 73-167; it reads VKISNYGWDQ…VENTRWDYLT (95 aa). Residues 73 to 228 are interaction with SKP1; the sequence is VKISNYGWDQ…EKQAKGDTEF (156 aa). Lys85 and Lys118 each carry N6-acetyllysine. Residues 154–228 are interaction with S100A6; that stretch reads CRKKVENTRW…EKQAKGDTEF (75 aa). One can recognise an SGS domain in the interval 168–228; that stretch reads QVEKERKEKE…EKQAKGDTEF (61 aa).

In terms of assembly, interacts with protein of the S100 family S100A1, S100A6, S100B, S100P and S100A12 in a calcium-dependent manner. Component of some large E3 complex at least composed of UBE2D1, SIAH1, CACYBP/SIP, SKP1, APC and TBL1X. Interacts directly with SIAH1, SIAH2 and SKP1. Post-translationally, phosphorylated on serine residues. Phosphorylated upon induction by RA or at high calcium concentrations.

The protein resides in the cytoplasm. The protein localises to the nucleus. May be involved in calcium-dependent ubiquitination and subsequent proteasomal degradation of target proteins. Probably serves as a molecular bridge in ubiquitin E3 complexes. Participates in the ubiquitin-mediated degradation of beta-catenin (CTNNB1). This Pongo abelii (Sumatran orangutan) protein is Calcyclin-binding protein (CACYBP).